Reading from the N-terminus, the 438-residue chain is Serine--tRNA ligase (438 aa).

245 to 247 (TAE) is a binding site for L-serine. 276 to 278 (RSE) lines the ATP pocket. Glu299 contacts L-serine. 363-366 (EISS) is an ATP binding site. Position 398 (Ser398) interacts with L-serine.

It belongs to the class-II aminoacyl-tRNA synthetase family. Type-1 seryl-tRNA synthetase subfamily. Homodimer. The tRNA molecule binds across the dimer.

Its subcellular location is the cytoplasm. It carries out the reaction tRNA(Ser) + L-serine + ATP = L-seryl-tRNA(Ser) + AMP + diphosphate + H(+). The catalysed reaction is tRNA(Sec) + L-serine + ATP = L-seryl-tRNA(Sec) + AMP + diphosphate + H(+). It functions in the pathway aminoacyl-tRNA biosynthesis; selenocysteinyl-tRNA(Sec) biosynthesis; L-seryl-tRNA(Sec) from L-serine and tRNA(Sec): step 1/1. Its function is as follows. Catalyzes the attachment of serine to tRNA(Ser). Is also able to aminoacylate tRNA(Sec) with serine, to form the misacylated tRNA L-seryl-tRNA(Sec), which will be further converted into selenocysteinyl-tRNA(Sec). This is Serine--tRNA ligase from Delftia acidovorans (strain DSM 14801 / SPH-1).